Here is a 383-residue protein sequence, read N- to C-terminus: uncharacterized protein (383 aa).

The protein belongs to the peptidase M20 family.

This is an uncharacterized protein from Staphylococcus aureus (strain bovine RF122 / ET3-1).